The primary structure comprises 424 residues: CAAX prenyl protease 1 homolog (424 aa).

Helical transmembrane passes span 3–23 (IPFM…ETYL), 67–87 (EFVT…PWFW), 109–129 (LSFL…FSLY), 155–175 (GTFL…FIVQ), and 185–205 (LWAF…VLIA). His284 lines the Zn(2+) pocket. Glu285 is an active-site residue. His288 contributes to the Zn(2+) binding site. The next 2 helical transmembrane spans lie at 295–315 (TYSF…YTLV) and 332–352 (VLIG…LVSF). Glu362 is a binding site for Zn(2+). Asp366 serves as the catalytic Proton donor.

This sequence belongs to the peptidase M48A family. Zn(2+) serves as cofactor. In terms of tissue distribution, expressed in leaves, stems and flowers.

It is found in the endoplasmic reticulum membrane. It catalyses the reaction Hydrolyzes the peptide bond -P2-(S-farnesyl or geranylgeranyl)C-P1'-P2'-P3'-COOH where P1' and P2' are amino acids with aliphatic side chains and P3' is any C-terminal residue.. Proteolytically removes the C-terminal three residues of farnesylated proteins. The substrate specificity is only partially overlapping with that of FACE2. The protein is CAAX prenyl protease 1 homolog (FACE1) of Arabidopsis thaliana (Mouse-ear cress).